The following is a 476-amino-acid chain: Serine--tRNA ligase (476 aa).

279–281 (TAE) lines the L-serine pocket. 310–312 (RAE) contacts ATP. Glu333 is an L-serine binding site. 400 to 403 (EISS) is a binding site for ATP. Ser435 serves as a coordination point for L-serine.

It belongs to the class-II aminoacyl-tRNA synthetase family. Type-1 seryl-tRNA synthetase subfamily. In terms of assembly, homodimer. The tRNA molecule binds across the dimer.

It localises to the cytoplasm. The enzyme catalyses tRNA(Ser) + L-serine + ATP = L-seryl-tRNA(Ser) + AMP + diphosphate + H(+). The catalysed reaction is tRNA(Sec) + L-serine + ATP = L-seryl-tRNA(Sec) + AMP + diphosphate + H(+). It functions in the pathway aminoacyl-tRNA biosynthesis; selenocysteinyl-tRNA(Sec) biosynthesis; L-seryl-tRNA(Sec) from L-serine and tRNA(Sec): step 1/1. In terms of biological role, catalyzes the attachment of serine to tRNA(Ser). Is also able to aminoacylate tRNA(Sec) with serine, to form the misacylated tRNA L-seryl-tRNA(Sec), which will be further converted into selenocysteinyl-tRNA(Sec). This Rhodopseudomonas palustris (strain BisA53) protein is Serine--tRNA ligase.